We begin with the raw amino-acid sequence, 166 residues long: Monodehydroascorbate reductase, fruit isozyme (166 aa).

It belongs to the FAD-dependent oxidoreductase family. FAD serves as cofactor. The N-terminus is blocked.

The catalysed reaction is 2 monodehydro-L-ascorbate radical + NADH + H(+) = 2 L-ascorbate + NAD(+). Catalyzes the conversion of monodehydroascorbate to ascorbate, oxidizing NADH in the process. The chain is Monodehydroascorbate reductase, fruit isozyme from Cucumis sativus (Cucumber).